Reading from the N-terminus, the 270-residue chain is Urease accessory protein UreD (270 aa).

The protein belongs to the UreD family. As to quaternary structure, ureD, UreF and UreG form a complex that acts as a GTP-hydrolysis-dependent molecular chaperone, activating the urease apoprotein by helping to assemble the nickel containing metallocenter of UreC. The complex may form in the order UreABCD, UreABCDF, UreABCDFG. The UreE protein probably delivers the nickel in a GTPase-dependent fashion.

Its subcellular location is the cytoplasm. Functionally, necessary for the functional incorporation of the urease nickel metallocenter. The protein is Urease accessory protein UreD of Klebsiella aerogenes (Enterobacter aerogenes).